A 680-amino-acid chain; its full sequence is Serine/threonine-protein kinase YPK1 (680 aa).

A compositionally biased stretch (basic residues) spans 1-11; the sequence is MYSWKSKFKFG. The interval 1 to 117 is disordered; sequence MYSWKSKFKF…GTPNDATSSS (117 aa). 2 stretches are compositionally biased toward basic and acidic residues: residues 12–21 and 41–56; these read KSKEEKEAKH and GEHD…DRKG. Threonine 57 bears the Phosphothreonine mark. A compositionally biased stretch (low complexity) spans 59–71; it reads NPSNSSVVPVRVS. 3 positions are modified to phosphoserine: serine 61, serine 64, and serine 71. Residues 73 to 83 are compositionally biased toward polar residues; the sequence is DASSSTSTVRD. The span at 84–97 shows a compositional bias: low complexity; that stretch reads SNGGNSENTNSSQN. The span at 98–117 shows a compositional bias: polar residues; that stretch reads LDETANIGSTGTPNDATSSS. The residue at position 170 (serine 170) is a Phosphoserine. The Protein kinase domain maps to 347–602; that stretch reads FDLLKVIGKG…ADEIRNHPFF (256 aa). Residues 353 to 361 and lysine 376 each bind ATP; that span reads IGKGSFGKV. The active-site Proton acceptor is aspartate 470. Threonine 502 carries the post-translational modification Phosphothreonine. Threonine 504 carries the phosphothreonine; by PKH1 modification. One can recognise an AGC-kinase C-terminal domain in the interval 603–673; it reads SQLSWKRLLM…VGNEQLGSSM (71 aa). Residues serine 644 and serine 653 each carry the phosphoserine modification. The residue at position 662 (threonine 662) is a Phosphothreonine; by PKH1. Serine 671 carries the post-translational modification Phosphoserine.

This sequence belongs to the protein kinase superfamily. AGC Ser/Thr protein kinase family. RAC subfamily. Post-translationally, autophosphorylated. Phytosphingosine level stimulates phosphorylation by PKH1. The N-terminal half is phosphorylated by FPK1. Phosphorylation is inhibited by exogenous addition of phytosphingosine.

The protein resides in the cytoplasm. It is found in the cell membrane. It carries out the reaction L-seryl-[protein] + ATP = O-phospho-L-seryl-[protein] + ADP + H(+). The catalysed reaction is L-threonyl-[protein] + ATP = O-phospho-L-threonyl-[protein] + ADP + H(+). Its activity is regulated as follows. Activated by phytosphingosine (PHS), a sphingoid long chain base. Activated by PKH1 phosphorylation. Its function is as follows. Plays an essential role in the proliferation of yeast cells. Involved in a signaling pathway, required for optimal cell wall integrity, that acts in parallel with the PKC1-SLT2-dependent pathway. Downstream kinase in the sphingolipid-mediated signaling pathway. Phosphorylation is regulated by the intracellular sphingolipid concentration. Disruption or inhibition of sphingolipid synthesis leads to the activation and phosphorylation of YPK1 through the TORC2 and PKH1 pathways, which in turn phosphorylates ORM1 and LAG1 to activate sphingolipid synthesis. Cooperates with SLI1 in mediating resistance to the sphingolipid biosynthesis inhibitor drug myriocin (ISP-1); kinase activity is essential for the resistance. Required for both receptor-mediated and fluid-phase endocytosis, but is not necessary for receptor phosphorylation or ubiquitination. Necessary for the internalization of plasma membrane proteins carrying different types of internalization signals. Acts downstream of the PKH kinases to control endocytosis by phosphorylating components of the endocytic machinery. Phosphorylation of residue Thr-504 in the activation loop and residue Thr-662 are essential for activity. Phosphorylates and down-regulates flippase activator FPK1. This chain is Serine/threonine-protein kinase YPK1 (YPK1), found in Saccharomyces cerevisiae (strain ATCC 204508 / S288c) (Baker's yeast).